The primary structure comprises 417 residues: Imidazolonepropionase (417 aa).

Fe(3+) contacts are provided by His-80 and His-82. Zn(2+) is bound by residues His-80 and His-82. Residues Arg-89, Tyr-152, and His-187 each contribute to the 4-imidazolone-5-propanoate site. Residue Tyr-152 coordinates N-formimidoyl-L-glutamate. His-252 is a Fe(3+) binding site. A Zn(2+)-binding site is contributed by His-252. Glu-255 contributes to the 4-imidazolone-5-propanoate binding site. Residue Asp-326 coordinates Fe(3+). Asp-326 provides a ligand contact to Zn(2+). N-formimidoyl-L-glutamate-binding residues include Asn-328 and Gly-330. Ser-331 serves as a coordination point for 4-imidazolone-5-propanoate.

The protein belongs to the metallo-dependent hydrolases superfamily. HutI family. Zn(2+) is required as a cofactor. Fe(3+) serves as cofactor.

The protein resides in the cytoplasm. It catalyses the reaction 4-imidazolone-5-propanoate + H2O = N-formimidoyl-L-glutamate. Its pathway is amino-acid degradation; L-histidine degradation into L-glutamate; N-formimidoyl-L-glutamate from L-histidine: step 3/3. Catalyzes the hydrolytic cleavage of the carbon-nitrogen bond in imidazolone-5-propanoate to yield N-formimidoyl-L-glutamate. It is the third step in the universal histidine degradation pathway. This Bacteroides thetaiotaomicron (strain ATCC 29148 / DSM 2079 / JCM 5827 / CCUG 10774 / NCTC 10582 / VPI-5482 / E50) protein is Imidazolonepropionase.